A 153-amino-acid polypeptide reads, in one-letter code: Xanthine-guanine phosphoribosyltransferase (153 aa).

Residues 37-38 (RG), R69, and 88-96 (DDLVDTGGT) contribute to the 5-phospho-alpha-D-ribose 1-diphosphate site. Residue R69 participates in GMP binding. Mg(2+) is bound at residue D89. 2 residues coordinate guanine: D92 and I135. Xanthine contacts are provided by D92 and I135. GMP-binding positions include 92–96 (DTGGT) and 134–135 (WI).

The protein belongs to the purine/pyrimidine phosphoribosyltransferase family. XGPT subfamily. In terms of assembly, homotetramer. The cofactor is Mg(2+).

It is found in the cell inner membrane. The catalysed reaction is GMP + diphosphate = guanine + 5-phospho-alpha-D-ribose 1-diphosphate. The enzyme catalyses XMP + diphosphate = xanthine + 5-phospho-alpha-D-ribose 1-diphosphate. It carries out the reaction IMP + diphosphate = hypoxanthine + 5-phospho-alpha-D-ribose 1-diphosphate. The protein operates within purine metabolism; GMP biosynthesis via salvage pathway; GMP from guanine: step 1/1. It participates in purine metabolism; XMP biosynthesis via salvage pathway; XMP from xanthine: step 1/1. Its function is as follows. Purine salvage pathway enzyme that catalyzes the transfer of the ribosyl-5-phosphate group from 5-phospho-alpha-D-ribose 1-diphosphate (PRPP) to the N9 position of the 6-oxopurines guanine and xanthine to form the corresponding ribonucleotides GMP (guanosine 5'-monophosphate) and XMP (xanthosine 5'-monophosphate), with the release of PPi. To a lesser extent, also acts on hypoxanthine. The sequence is that of Xanthine-guanine phosphoribosyltransferase from Proteus mirabilis (strain HI4320).